A 339-amino-acid polypeptide reads, in one-letter code: MKEKLKELQELAIKQIENSIKSNELEEIRVKFLGKKGELTTILRGMGGLSPEERPLVGKLVNEAKAKVEEKLESAIKKIKDKEKAEKLAGETIDISLPGKKQVIGKSHPLELTLKNMEDIFVSMGFTIEEGPEVEYDHYNFEALNIPKNHPARSEQDTLYINDNIVLRTQTSPVQVRTMENQKPPIKMISPGKVYRSDSVDATHSPIFYQMEGLVIDKGVTFADLKGTLELFAKKMFGDKVETKFRPHHFPFTEPSAEMDATCFVCGGEGCRVCKNSGWIELLGCGMVHPNVLRNCGIDPEVYSGFAFGFGVDRMVMLKYGIDDIRLLYESDMRFLNQF.

Mg(2+) is bound at residue Glu-254.

Belongs to the class-II aminoacyl-tRNA synthetase family. Phe-tRNA synthetase alpha subunit type 1 subfamily. As to quaternary structure, tetramer of two alpha and two beta subunits. Mg(2+) is required as a cofactor.

The protein resides in the cytoplasm. The enzyme catalyses tRNA(Phe) + L-phenylalanine + ATP = L-phenylalanyl-tRNA(Phe) + AMP + diphosphate + H(+). In Clostridium botulinum (strain Alaska E43 / Type E3), this protein is Phenylalanine--tRNA ligase alpha subunit.